A 327-amino-acid polypeptide reads, in one-letter code: Aspartate--ammonia ligase (327 aa).

This sequence belongs to the class-II aminoacyl-tRNA synthetase family. AsnA subfamily.

It localises to the cytoplasm. The catalysed reaction is L-aspartate + NH4(+) + ATP = L-asparagine + AMP + diphosphate + H(+). It participates in amino-acid biosynthesis; L-asparagine biosynthesis; L-asparagine from L-aspartate (ammonia route): step 1/1. This is Aspartate--ammonia ligase from Bacillus cereus (strain ATCC 10987 / NRS 248).